A 545-amino-acid polypeptide reads, in one-letter code: Methionine--tRNA ligase (545 aa).

The 'HIGH' region motif lies at 15 to 25 (PYANGPIHIGH). Zn(2+) is bound by residues Cys-146, Cys-149, Cys-159, and Cys-162. The 'KMSKS' region motif lies at 332-336 (KLSKS). ATP is bound at residue Lys-335.

Belongs to the class-I aminoacyl-tRNA synthetase family. MetG type 1 subfamily. As to quaternary structure, monomer. The cofactor is Zn(2+).

It is found in the cytoplasm. It catalyses the reaction tRNA(Met) + L-methionine + ATP = L-methionyl-tRNA(Met) + AMP + diphosphate. Functionally, is required not only for elongation of protein synthesis but also for the initiation of all mRNA translation through initiator tRNA(fMet) aminoacylation. The sequence is that of Methionine--tRNA ligase (metG) from Buchnera aphidicola subsp. Schizaphis graminum (strain Sg).